The following is a 119-amino-acid chain: C-X-C motif chemokine 17 (119 aa).

The first 22 residues, Met-1–Ser-22, serve as a signal peptide directing secretion. The tract at residues Cys-75–Ser-100 is disordered. Disulfide bonds link Cys-75-Cys-103 and Cys-77-Cys-110. The segment covering Gly-82–Arg-98 has biased composition (basic residues).

Belongs to the intercrine alpha (chemokine CxC) family. Likely to undergo an endoproteolytic process to form a four-cysteine-containing mature peptide with a canonical CXC chemokine scaffold after secretion. In terms of tissue distribution, detected in lung, trachea, lung, tongue thyroid, submaxillary gland, epididymis, and uterus tissues and at a lower level in ovary, prostate and in intestinal tissues.

It localises to the secreted. Chemokine that acts as a chemoattractant for monocytes, macrophages and dendritic cells. Plays a role in angiogenesis and possibly in the development of tumors. Acts as an anti-inflammatory in the stomach. May play a role in the innate defense against infections. Activates the C-X-C chemokine receptor GPR35 to induce a rapid and transient rise in the level of intracellular calcium ions. This is C-X-C motif chemokine 17 (Cxcl17) from Mus musculus (Mouse).